We begin with the raw amino-acid sequence, 284 residues long: MALPVNKRVPKILFILFVVAFCVYLVPRVAINFFYYPDDKIYGPDPWSAESVEFTAKDGTRLQGWFIPSSTGPADNAIATIIHAHGNAGNMSAHWPLVSWLPERNFNVFMFDYRGFGKSKGTPSQAGLLDDTQSAINVVRHRSDVNPQRLVLFGQSIGGANILDVIGRGDREGIRAVILDSTFASYATIANQMIPGSGYLLDESYSGENYIASVSPIPLLLIHGKADHVIPWQHSEKLYSLAKEPKRLILIPDGEHIDAFSDRHGDVYREQMVDFILSALNPQN.

The helical transmembrane segment at 12–32 (ILFILFVVAFCVYLVPRVAIN) threads the bilayer.

This sequence belongs to the serine esterase family.

It is found in the membrane. This is an uncharacterized protein from Escherichia coli (strain K12).